We begin with the raw amino-acid sequence, 789 residues long: MEEPGAGFILNMTSDSKVRAIVGRIRGLAAKTVPPPEMSWFDSQFDPEDAEGPFLPFSTFLITGTAGAGKSTSISALYQSLNCLITGATAVAAQNLSNGLKTYCPTIYSAFGFKSRHINILPRHGRNAPARDMEGIQRNELCKYWPVISDILGEFTKKKQRGQYEHLTGAAFGALAKMGTPTLWTTNIIVIDEAGTLSSHILTAVVFLYWFYNSWLQTPLYKSGAVPCVVCVGSPTQTDAIQSTYNHSMQKHHIQECDNILTFLMKHEAVSRYVDLNHNWALFINNKRCTDPEFGHLLKTLEYNLDISPRMVDYIDRFVVPKSKILSPLEYVGWTRLFVSHREVKAYLTALHETLSLNQGGATAEADARLFTCPVVCEVFTDTFNEYREAVNLPGLTVTEWLQKNLCRLSNYSQFIDQDLSAVHIETGEESTKVTYLVKYVKNSYVSLNGKTKKCICGFMGTFEKFKTILDNETFIDAHSHDQPEYVYSFLNTLLYNGMYAFHKHGLDAGDEGYLDALRRLPIPPNITHLSTFQDALDQTEAALLNPESDIFYHMTCAPPSASSASLSTLISFYMSLKSVFLQRLALAVSRFGRDFAERTFQTFTINMMIQNGVDFTSASERLFGLLGYASNVDTYKLKGYTFIPVGFGRFNQAELSRDLRDKMPVVVVEDPHGFIACLENNVNKMTEVMENGDLIHICTAGDYGISSKLAMTIAKAQGMSLSRVAVCFGNSKFVRKSHVYVAISRATDPRHMVIDCNPLKNLEEDREDNKTSKYIVQALNNPDTILVY.

Residue 64 to 71 (GTAGAGKS) coordinates ATP.

This sequence belongs to the herpesviridae helicase family. Associates with the primase and the primase-associated factor to form the helicase-primase complex.

The protein resides in the host nucleus. Its function is as follows. Component of the helicase/primase complex. Unwinds the DNA at the replication forks and generates single-stranded DNA for both leading and lagging strand synthesis. The primase synthesizes short RNA primers on the lagging strand that the polymerase elongates using dNTPs. Possesses helicase-like motifs and therefore may act as the helicase subunit of the complex. This is DNA replication helicase from Equus caballus (Horse).